A 664-amino-acid chain; its full sequence is UvrABC system protein B (664 aa).

Positions 23-180 (EGLNRGMRFQ…ERLARIGYQR (158 aa)) constitute a Helicase ATP-binding domain. Position 36-43 (36-43 (GVTGSGKT)) interacts with ATP. Positions 89 to 112 (YYDYYQPEAYIPTKDLYIEKNADI) match the Beta-hairpin motif. The region spanning 429 to 588 (DLVNEIVKVK…ITPRSVIKPL (160 aa)) is the Helicase C-terminal domain. The 36-residue stretch at 622 to 657 (EEYMAVLEEEMYRAASELRYEDAAALRDELFRIREE) folds into the UVR domain.

Belongs to the UvrB family. In terms of assembly, forms a heterotetramer with UvrA during the search for lesions. Interacts with UvrC in an incision complex.

Its subcellular location is the cytoplasm. Functionally, the UvrABC repair system catalyzes the recognition and processing of DNA lesions. A damage recognition complex composed of 2 UvrA and 2 UvrB subunits scans DNA for abnormalities. Upon binding of the UvrA(2)B(2) complex to a putative damaged site, the DNA wraps around one UvrB monomer. DNA wrap is dependent on ATP binding by UvrB and probably causes local melting of the DNA helix, facilitating insertion of UvrB beta-hairpin between the DNA strands. Then UvrB probes one DNA strand for the presence of a lesion. If a lesion is found the UvrA subunits dissociate and the UvrB-DNA preincision complex is formed. This complex is subsequently bound by UvrC and the second UvrB is released. If no lesion is found, the DNA wraps around the other UvrB subunit that will check the other stand for damage. This chain is UvrABC system protein B, found in Thermotoga petrophila (strain ATCC BAA-488 / DSM 13995 / JCM 10881 / RKU-1).